A 272-amino-acid polypeptide reads, in one-letter code: Nuclear transcription factor Y subunit A-1 (272 aa).

2 disordered regions span residues 1–20 (MQSKPGRENEEEVNNHHAVQ) and 34–106 (SFGV…PALS). Composition is skewed to polar residues over residues 46 to 61 (IPSNSSSLDCPNGSES) and 82 to 92 (KDSQAATSSRS). The short motif at 175-198 (YVNAKQYEGILRRRKARAKAELER) is the Subunit association domain (SAD) element. A DNA-binding region (NFYA/HAP2-type) is located at residues 205–230 (KPYLHESRHKHAMRRARASGGRFAKK). Residues 206 to 272 (PYLHESRHKH…NETLNSSGAP (67 aa)) form a disordered region. Positions 211 to 221 (SRHKHAMRRAR) are enriched in basic residues. The span at 229–247 (KKSEVEAGEDAGGRDRERG) shows a compositional bias: basic and acidic residues. Polar residues-rich tracts occupy residues 248-257 (SATNSSGSEQ) and 263-272 (NETLNSSGAP).

It belongs to the NFYA/HAP2 subunit family. As to quaternary structure, heterotrimeric transcription factor composed of three components, NF-YA, NF-YB and NF-YC. NF-YB and NF-YC must interact and dimerize for NF-YA association and DNA binding. Ubiquitous.

The protein resides in the nucleus. In terms of biological role, stimulates the transcription of various genes by recognizing and binding to a CCAAT motif in promoters. The sequence is that of Nuclear transcription factor Y subunit A-1 (NFYA1) from Arabidopsis thaliana (Mouse-ear cress).